We begin with the raw amino-acid sequence, 472 residues long: Protein hedgehog (472 aa).

Cys-84 carries N-palmitoyl cysteine lipidation. Ca(2+) is bound by residues Glu-149, Asp-154, Glu-185, Asp-188, and Asp-190. A lipid anchor (Cholesterol glycine ester) is attached at Gly-256.

Belongs to the hedgehog family. As to quaternary structure, interacts with shf. In terms of processing, the C-terminal part of the hedgehog protein precursor displays an autoproteolysis activity that results in the cleavage of the full-length protein into two parts (N-product and C-product). In addition, the C-terminal part displays a cholesterol transferase activity that results by the covalent attachment of a cholesterol moiety to the C-terminal of the newly generated N-product. The N-product is the active species in both local and long-range signaling, whereas the C-product has no signaling activity. Post-translationally, cholesterylation is required for N-product targeting to lipid rafts and multimerization. N-palmitoylation by Rasp of the hedgehog N-product, within the secretory pathway, is required for the embryonic and larval patterning activities of the hedgehog signal.

Its subcellular location is the nucleus. The protein resides in the cytoplasm. It is found in the cell membrane. It catalyses the reaction glycyl-L-cysteinyl-[protein] + cholesterol + H(+) = [protein]-C-terminal glycyl cholesterol ester + N-terminal L-cysteinyl-[protein]. The C-terminal part of the hedgehog protein precursor displays an autoproteolysis activity that results in the cleavage of the full-length protein into two parts (N-product and C-product). In addition, the C-terminal part displays a cholesterol transferase activity that results by the covalent attachment of a cholesterol moiety to the C-terminal of the newly generated N-product. Once cleaved, the C-product has no signaling activity and diffuses from the cell. Its function is as follows. The dually lipidated hedgehog protein N-product is a morphogen which is essential for a variety of patterning events during development. Establishes the anterior-posterior axis of the embryonic segments and patterns the larval imaginal disks. Binds to the patched (ptc) receptor, which functions in association with smoothened (smo), to activate the transcription of target genes wingless (wg), decapentaplegic (dpp) and ptc. In the absence of hh, ptc represses the constitutive signaling activity of smo through fused (fu). Essential component of a signaling pathway which regulates the Duox-dependent gut immune response to bacterial uracil; required to activate Cad99C-dependent endosome formation, norpA-dependent Ca2+ mobilization and p38 MAPK, which are essential steps in the Duox-dependent production of reactive oxygen species (ROS) in response to intestinal bacterial infection. During photoreceptor differentiation, it up-regulates transcription of Ubr3, which in turn promotes the hh-signaling pathway by mediating the ubiquitination and degradation of cos. The sequence is that of Protein hedgehog from Drosophila ananassae (Fruit fly).